A 513-amino-acid chain; its full sequence is ATP synthase subunit alpha (513 aa).

169-176 (GDRQIGKT) lines the ATP pocket.

The protein belongs to the ATPase alpha/beta chains family. F-type ATPases have 2 components, CF(1) - the catalytic core - and CF(0) - the membrane proton channel. CF(1) has five subunits: alpha(3), beta(3), gamma(1), delta(1), epsilon(1). CF(0) has three main subunits: a(1), b(2) and c(9-12). The alpha and beta chains form an alternating ring which encloses part of the gamma chain. CF(1) is attached to CF(0) by a central stalk formed by the gamma and epsilon chains, while a peripheral stalk is formed by the delta and b chains.

It is found in the cell inner membrane. It catalyses the reaction ATP + H2O + 4 H(+)(in) = ADP + phosphate + 5 H(+)(out). Produces ATP from ADP in the presence of a proton gradient across the membrane. The alpha chain is a regulatory subunit. In Shewanella piezotolerans (strain WP3 / JCM 13877), this protein is ATP synthase subunit alpha.